The primary structure comprises 45 residues: Scolopendra 20417.15 Da toxin (45 aa).

The segment at 26 to 45 (KVANGQEAGQPGAXNMKELH) is disordered.

Belongs to the CRISP family. Venom allergen 5-like subfamily. Post-translationally, contains 3 disulfide bonds. Expressed by the venom gland.

It localises to the secreted. The chain is Scolopendra 20417.15 Da toxin from Scolopendra viridicornis nigra (Brazilian giant centipede).